A 302-amino-acid polypeptide reads, in one-letter code: Meiotic recombination protein rec14 (302 aa).

WD repeat units lie at residues 14–51, 57–96, 101–140, 142–184, 185–226, 227–266, and 269–302; these read AHQA…HSLV, PHKL…FRDL, QHPS…KISE, DTKG…HVLS, GHTS…GQLR, GHAA…CIST, and ETDG…AATE.

Component of the DSB catalytic core (DSBC) complex, composed of at least rec12, rec6 and rec14. The complex interacts with mde2.

Functionally, required for formation of the rec12-mediated double-strand breaks (DSBs) that initiate meiotic recombination. This chain is Meiotic recombination protein rec14, found in Schizosaccharomyces pombe (strain 972 / ATCC 24843) (Fission yeast).